We begin with the raw amino-acid sequence, 341 residues long: Very-long-chain 3-oxoacyl-CoA reductase (341 aa).

A helical membrane pass occupies residues 22–42; sequence AVTGFLLVGIASFAAPLISTI. Leucine 67, aspartate 123, aspartate 131, asparagine 150, tyrosine 217, lysine 221, valine 250, and threonine 252 together coordinate NADP(+). Tyrosine 217 functions as the Proton donor in the catalytic mechanism. Lysine 221 (lowers pKa of active site Tyr) is an active-site residue.

Belongs to the short-chain dehydrogenases/reductases (SDR) family.

The protein resides in the endoplasmic reticulum membrane. It catalyses the reaction a very-long-chain (3R)-3-hydroxyacyl-CoA + NADP(+) = a very-long-chain 3-oxoacyl-CoA + NADPH + H(+). It functions in the pathway lipid metabolism; fatty acid biosynthesis. Component of the microsomal membrane bound fatty acid elongation system, which produces the 26-carbon very long-chain fatty acids (VLCFA) from palmitate. Catalyzes the reduction of the 3-ketoacyl-CoA intermediate that is formed in each cycle of fatty acid elongation. VLCFAs serve as precursors for ceramide and sphingolipids. This chain is Very-long-chain 3-oxoacyl-CoA reductase, found in Pyrenophora tritici-repentis (strain Pt-1C-BFP) (Wheat tan spot fungus).